Reading from the N-terminus, the 150-residue chain is Oleosin Ara h 10.0102 (150 aa).

The next 2 membrane-spanning stretches (helical) occupy residues 39–59 (VIAVITGLPIGGTLLLFAGLA) and 73–93 (LFILFSPVIVPATIVVGLSVA).

It belongs to the oleosin family. In terms of tissue distribution, expressed in seeds (at protein level).

It is found in the lipid droplet. The protein resides in the membrane. May have a structural role to stabilize the lipid body during desiccation of the seed by preventing coalescence of the oil. Probably interacts with both lipid and phospholipid moieties of lipid bodies. May also provide recognition signals for specific lipase anchorage in lipolysis during seedling growth. This chain is Oleosin Ara h 10.0102, found in Arachis hypogaea (Peanut).